We begin with the raw amino-acid sequence, 546 residues long: 2-isopropylmalate synthase (546 aa).

The Pyruvate carboxyltransferase domain occupies 8 to 271 (ILIFDTTLRD…NSFFGRSSDS (264 aa)). Residues aspartate 17, histidine 208, histidine 210, and asparagine 244 each contribute to the Mn(2+) site. The interval 408–546 (QLSHVQVSCG…EKKVFSNPKN (139 aa)) is regulatory domain.

Belongs to the alpha-IPM synthase/homocitrate synthase family. LeuA type 1 subfamily. In terms of assembly, homodimer. It depends on Mn(2+) as a cofactor.

The protein resides in the cytoplasm. It carries out the reaction 3-methyl-2-oxobutanoate + acetyl-CoA + H2O = (2S)-2-isopropylmalate + CoA + H(+). It functions in the pathway amino-acid biosynthesis; L-leucine biosynthesis; L-leucine from 3-methyl-2-oxobutanoate: step 1/4. Its function is as follows. Catalyzes the condensation of the acetyl group of acetyl-CoA with 3-methyl-2-oxobutanoate (2-ketoisovalerate) to form 3-carboxy-3-hydroxy-4-methylpentanoate (2-isopropylmalate). This chain is 2-isopropylmalate synthase, found in Prochlorococcus marinus (strain MIT 9515).